The sequence spans 346 residues: Phosphoribosylformylglycinamidine cyclo-ligase (346 aa).

The protein belongs to the AIR synthase family.

Its subcellular location is the cytoplasm. It carries out the reaction 2-formamido-N(1)-(5-O-phospho-beta-D-ribosyl)acetamidine + ATP = 5-amino-1-(5-phospho-beta-D-ribosyl)imidazole + ADP + phosphate + H(+). It functions in the pathway purine metabolism; IMP biosynthesis via de novo pathway; 5-amino-1-(5-phospho-D-ribosyl)imidazole from N(2)-formyl-N(1)-(5-phospho-D-ribosyl)glycinamide: step 2/2. In Bacillus cereus (strain AH187), this protein is Phosphoribosylformylglycinamidine cyclo-ligase.